Here is a 210-residue protein sequence, read N- to C-terminus: Thymidylate kinase (210 aa).

Residue 10 to 17 (GLEGAGKS) participates in ATP binding.

It belongs to the thymidylate kinase family.

It catalyses the reaction dTMP + ATP = dTDP + ADP. Phosphorylation of dTMP to form dTDP in both de novo and salvage pathways of dTTP synthesis. This is Thymidylate kinase from Haemophilus influenzae (strain PittGG).